A 447-amino-acid chain; its full sequence is Retinoic acid receptor alpha (447 aa).

Residues 1–79 (MAGKGNPVPG…PPPPPRVYKP (79 aa)) are modulating. Residues 47–61 (TPSPATIETQSTSSE) show a composition bias toward polar residues. The disordered stretch occupies residues 47 to 72 (TPSPATIETQSTSSEEIVPSPPSPPP). NR C4-type zinc fingers lie at residues 80 to 100 (CFVCQDKSSGYHYGVSACEGC) and 116 to 140 (CHREKNCIINKVTRNRCQYCRLQKC). A DNA-binding region (nuclear receptor) is located at residues 80-145 (CFVCQDKSSG…RLQKCLEVGM (66 aa)). The segment at 146 to 174 (SKESVRNDRNKKKKDEKKPECIENYVLSP) is hinge. An NR LBD domain is found at 175–409 (DTEQMINRVR…PLIQEMLENS (235 aa)). The short motif at 400 to 408 (PLIQEMLEN) is the 9aaTAD element. The segment at 407-447 (ENSEGLESGATGSRPSGAPPGSCSPSLSPSSAQSSPPTQSP) is disordered. Over residues 414–447 (SGATGSRPSGAPPGSCSPSLSPSSAQSSPPTQSP) the composition is skewed to low complexity.

Belongs to the nuclear hormone receptor family. NR1 subfamily. As to quaternary structure, heterodimer; with an rxr molecule. Binds DNA preferentially as a rar/rxr heterodimer.

It localises to the nucleus. In terms of biological role, receptor for retinoic acid. Retinoic acid receptors bind as heterodimers to their target response elements in response to their ligands, all-trans or 9-cis retinoic acid, and regulate gene expression in various biological processes. The rar/rxr heterodimers bind to the retinoic acid response elements (RARE) composed of tandem 5'-AGGTCA-3' sites known as DR1-DR5. This is Retinoic acid receptor alpha (rara) from Takifugu rubripes (Japanese pufferfish).